A 306-amino-acid chain; its full sequence is Homoserine O-acetyltransferase (306 aa).

C142 serves as the catalytic Acyl-thioester intermediate. Substrate-binding residues include K163 and S192. Catalysis depends on H235, which acts as the Proton acceptor. E237 is a catalytic residue. R249 contacts substrate.

This sequence belongs to the MetA family.

The protein resides in the cytoplasm. The enzyme catalyses L-homoserine + acetyl-CoA = O-acetyl-L-homoserine + CoA. Its pathway is amino-acid biosynthesis; L-methionine biosynthesis via de novo pathway; O-acetyl-L-homoserine from L-homoserine: step 1/1. In terms of biological role, transfers an acetyl group from acetyl-CoA to L-homoserine, forming acetyl-L-homoserine. This Brucella abortus (strain S19) protein is Homoserine O-acetyltransferase.